We begin with the raw amino-acid sequence, 635 residues long: Extracellular metalloproteinase mep (635 aa).

An N-terminal signal peptide occupies residues 1–19 (MMRGLLLAGALGLPLAVLA). Positions 20-246 (HPTHHAHGLQ…VHGVVDYVAE (227 aa)) are excised as a propeptide. Residue asparagine 287 is glycosylated (N-linked (GlcNAc...) asparagine). Residues 290-309 (TTRGNNGIAQSNPTGGSQYL) show a composition bias toward polar residues. The interval 290 to 311 (TTRGNNGIAQSNPTGGSQYLKN) is disordered. Residue histidine 430 coordinates Zn(2+). Glutamate 431 is an active-site residue. Zn(2+) is bound at residue histidine 434.

This sequence belongs to the peptidase M36 family. Zn(2+) is required as a cofactor.

The protein resides in the secreted. Its function is as follows. Secreted metalloproteinase that allows assimilation of proteinaceous substrates. This Aspergillus flavus (strain ATCC 200026 / FGSC A1120 / IAM 13836 / NRRL 3357 / JCM 12722 / SRRC 167) protein is Extracellular metalloproteinase mep (mep).